Consider the following 267-residue polypeptide: Formamidopyrimidine-DNA glycosylase (267 aa).

The active-site Schiff-base intermediate with DNA is proline 2. Glutamate 3 functions as the Proton donor in the catalytic mechanism. The active-site Proton donor; for beta-elimination activity is lysine 58. DNA-binding residues include histidine 91, arginine 110, and arginine 152. The FPG-type zinc finger occupies 233 to 267; sequence DVYGRGHGTCTSCGGALEAVRLGNRSTVFCPRCQQ. Catalysis depends on arginine 257, which acts as the Proton donor; for delta-elimination activity.

The protein belongs to the FPG family. In terms of assembly, monomer. Zn(2+) serves as cofactor.

The catalysed reaction is Hydrolysis of DNA containing ring-opened 7-methylguanine residues, releasing 2,6-diamino-4-hydroxy-5-(N-methyl)formamidopyrimidine.. The enzyme catalyses 2'-deoxyribonucleotide-(2'-deoxyribose 5'-phosphate)-2'-deoxyribonucleotide-DNA = a 3'-end 2'-deoxyribonucleotide-(2,3-dehydro-2,3-deoxyribose 5'-phosphate)-DNA + a 5'-end 5'-phospho-2'-deoxyribonucleoside-DNA + H(+). Functionally, involved in base excision repair of DNA damaged by oxidation or by mutagenic agents. Acts as a DNA glycosylase that recognizes and removes damaged bases. Has a preference for oxidized purines, such as 7,8-dihydro-8-oxoguanine (8-oxoG). Has AP (apurinic/apyrimidinic) lyase activity and introduces nicks in the DNA strand. Cleaves the DNA backbone by beta-delta elimination to generate a single-strand break at the site of the removed base with both 3'- and 5'-phosphates. The chain is Formamidopyrimidine-DNA glycosylase from Pelobacter propionicus (strain DSM 2379 / NBRC 103807 / OttBd1).